Reading from the N-terminus, the 369-residue chain is Transforming protein Maf (369 aa).

Disordered regions lie at residues 57–85 (STPMSTPCSSVPPSPSFSAPSPGSGTDQK) and 169–243 (GGAP…GLHF). Residues 173–183 (HYHHHHHHPHH) show a composition bias toward basic residues. Gly residues predominate over residues 184-193 (GGGGGGGGHP). The span at 194–211 (HGAAPGSAPPSSASSSAA) shows a compositional bias: low complexity. A compositionally biased stretch (gly residues) spans 212–226 (GSGGGGGGGGGGAGG). Positions 274–299 (RLKQKRRTLKNRGYAQSCRFKRVQQR) are basic motif. Positions 274 to 337 (RLKQKRRTLK…DAYKEKYEKL (64 aa)) constitute a bZIP domain. The leucine-zipper stretch occupies residues 302–323 (LESEKNQLLQQVEHLKQEISRL). Residues 341–369 (GFRENGSSSDNPSSPEFFMYPRESSTTVM) are disordered. Over residues 345–354 (NGSSSDNPSS) the composition is skewed to polar residues.

It belongs to the bZIP family. Maf subfamily.

The protein resides in the host nucleus. Its function is as follows. Might be a transcriptional trans-activator. This is Transforming protein Maf (V-MAF) from Galliformes.